Here is a 799-residue protein sequence, read N- to C-terminus: Zinc finger protein 227 (799 aa).

Residues 23 to 94 (VTFKDVAVVF…ETETQRSSKH (72 aa)) form the KRAB domain. C2H2-type zinc fingers lie at residues 250-272 (HPCG…PNVH), 269-291 (PNVH…QRIH), 324-346 (YRCD…YRTH), 352-374 (YKCE…QRVH), 380-402 (YKCE…QRVH), 408-430 (YKCE…QRVH), 436-458 (YKCD…RRVH), 464-486 (YKCE…FRVH), 492-514 (YKCK…QNVH), 520-542 (FKCE…QRVH), 548-570 (YRCD…QVIH), 576-598 (YKCE…QRVH), 604-626 (YKCE…QRVH), 632-654 (YKCG…QRVH), 660-682 (YKCD…QRGH), 688-710 (YKCE…QRVH), 716-738 (HICE…LGVH), 744-766 (FKCE…QRVH), and 772-794 (YKCD…QKVH).

It belongs to the krueppel C2H2-type zinc-finger protein family.

The protein localises to the nucleus. In terms of biological role, may be involved in transcriptional regulation. This is Zinc finger protein 227 (ZNF227) from Homo sapiens (Human).